The primary structure comprises 906 residues: Disintegrin and metalloproteinase domain-containing protein 22 (906 aa).

Positions 1–25 (MQAAVAVSVPFLLLCVLGTCPPARC) are cleaved as a signal peptide. A propeptide spanning residues 26–222 (GQAGDASLME…KFILKPRPKR (197 aa)) is cleaved from the precursor. Asn-175 is a glycosylation site (N-linked (GlcNAc...) asparagine). Topologically, residues 223–736 (SKRQLRRYPR…LSGNGVAGTN (514 aa)) are extracellular. One can recognise a Peptidase M12B domain in the interval 239–438 (KYIELMIVND…GGGACLFNKP (200 aa)). 17 cysteine pairs are disulfide-bonded: Cys-349-Cys-433, Cys-392-Cys-417, Cys-394-Cys-401, Cys-447-Cys-477, Cys-458-Cys-474, Cys-460-Cys-466, Cys-473-Cys-494, Cys-485-Cys-491, Cys-490-Cys-516, Cys-503-Cys-523, Cys-510-Cys-542, Cys-535-Cys-547, Cys-554-Cys-605, Cys-569-Cys-635, Cys-583-Cys-593, Cys-600-Cys-663, and Cys-657-Cys-668. The Disintegrin domain maps to 444-531 (PPECGNGFIE…QCAPNIHKMD (88 aa)). N-linked (GlcNAc...) asparagine glycosylation occurs at Asn-519. N-linked (GlcNAc...) asparagine glycosylation is present at Asn-634. N-linked (GlcNAc...) asparagine glycosylation occurs at Asn-675. An EGF-like domain is found at 675–712 (NFSTCLSSKEGTICSGNGVCSNELKCVCNRHWIGSDCN). Intrachain disulfides connect Cys-679-Cys-694, Cys-688-Cys-700, and Cys-702-Cys-711. The chain crosses the membrane as a helical span at residues 737–757 (IIIGIIAGTILVLALILGITA). The Cytoplasmic segment spans residues 758–906 (WGYKNYREQR…QSARLWETSI (149 aa)). The disordered stretch occupies residues 785-906 (YSDIPPGVST…QSARLWETSI (122 aa)). Over residues 793–810 (STNSASSSKKRSNGLSHS) the composition is skewed to low complexity. Residue Ser-810 is modified to Phosphoserine. Residues 811–829 (WSERIPDTKHISDICENGR) are compositionally biased toward basic and acidic residues. Ser-834 is modified (phosphoserine). Over residues 842-853 (NKKKIRGKRFRP) the composition is skewed to basic residues. Ser-857, Ser-862, Ser-866, and Ser-870 each carry phosphoserine. Low complexity predominate over residues 862–877 (SPAKSPSSSTGSIASS).

Interacts with LGI1. Interacts with DLG4/PSD95. Also binds LGI4. Interacts with KCNA2 and DLG2. Interacts with ADAM11. Interacts (via C-terminus) with YWHAB/14-3-3 beta. Interacts (via C-terminus) with YWHAZ/14-3-3 zeta. Post-translationally, the precursor is cleaved by a furin endopeptidase. Highly expressed in the brain and in some high-grade but not low-grade gliomas. Detected slightly or not at all in other tissues.

It is found in the cell membrane. Its subcellular location is the cell projection. The protein resides in the axon. Functionally, probable ligand for integrin in the brain. This is a non catalytic metalloprotease-like protein. Involved in regulation of cell adhesion and spreading and in inhibition of cell proliferation. Neuronal receptor for LGI1. In Homo sapiens (Human), this protein is Disintegrin and metalloproteinase domain-containing protein 22 (ADAM22).